Here is a 580-residue protein sequence, read N- to C-terminus: Threonine--tRNA ligase (580 aa).

The interval aspartate 179–proline 476 is catalytic. Positions 272, 323, and 453 each coordinate Zn(2+).

It belongs to the class-II aminoacyl-tRNA synthetase family. Homodimer. Zn(2+) is required as a cofactor.

Its subcellular location is the cytoplasm. The catalysed reaction is tRNA(Thr) + L-threonine + ATP = L-threonyl-tRNA(Thr) + AMP + diphosphate + H(+). Catalyzes the attachment of threonine to tRNA(Thr) in a two-step reaction: L-threonine is first activated by ATP to form Thr-AMP and then transferred to the acceptor end of tRNA(Thr). Also edits incorrectly charged L-seryl-tRNA(Thr). This chain is Threonine--tRNA ligase, found in Ureaplasma parvum serovar 3 (strain ATCC 27815 / 27 / NCTC 11736).